The following is a 101-amino-acid chain: UPF0235 protein SG2030 (101 aa).

This sequence belongs to the UPF0235 family.

This Sodalis glossinidius (strain morsitans) protein is UPF0235 protein SG2030.